The following is a 31-amino-acid chain: Cytochrome b6-f complex subunit 6 (31 aa).

Residues 3–23 traverse the membrane as a helical segment; sequence TITSYFGFLLAVLTITSGLFI.

It belongs to the PetL family. In terms of assembly, the 4 large subunits of the cytochrome b6-f complex are cytochrome b6, subunit IV (17 kDa polypeptide, PetD), cytochrome f and the Rieske protein, while the 4 small subunits are PetG, PetL, PetM and PetN. The complex functions as a dimer.

The protein localises to the plastid. The protein resides in the chloroplast thylakoid membrane. In terms of biological role, component of the cytochrome b6-f complex, which mediates electron transfer between photosystem II (PSII) and photosystem I (PSI), cyclic electron flow around PSI, and state transitions. PetL is important for photoautotrophic growth as well as for electron transfer efficiency and stability of the cytochrome b6-f complex. This chain is Cytochrome b6-f complex subunit 6, found in Lotus japonicus (Lotus corniculatus var. japonicus).